The following is a 61-amino-acid chain: Small ribosomal subunit protein uS14B (61 aa).

Zn(2+) contacts are provided by C24, C27, C40, and C43.

It belongs to the universal ribosomal protein uS14 family. Zinc-binding uS14 subfamily. In terms of assembly, part of the 30S ribosomal subunit. Contacts proteins S3 and S10. Zn(2+) is required as a cofactor.

In terms of biological role, binds 16S rRNA, required for the assembly of 30S particles and may also be responsible for determining the conformation of the 16S rRNA at the A site. In Saccharopolyspora erythraea (strain ATCC 11635 / DSM 40517 / JCM 4748 / NBRC 13426 / NCIMB 8594 / NRRL 2338), this protein is Small ribosomal subunit protein uS14B.